Here is a 417-residue protein sequence, read N- to C-terminus: RH-like protein IC (417 aa).

The next 11 helical transmembrane spans lie at 12-32 (CLPL…YFFT), 44-64 (LVAS…GFGF), 77-97 (VAFN…LDGF), 125-145 (ISAG…MVLV), 172-192 (FYVF…KPLP), 203-223 (TIPS…WPSF), 238-258 (VFNT…VSSL), 265-285 (INMT…GTSC), 287-307 (LITS…ISIG), 331-351 (NFSL…VLHT), and 358-378 (MVGF…AIAV).

Belongs to the ammonium transporter (TC 2.A.49) family. Rh subfamily.

The protein resides in the membrane. In terms of biological role, may be part of an oligomeric complex which is likely to have a transport or channel function in the erythrocyte membrane. This is RH-like protein IC from Gorilla gorilla gorilla (Western lowland gorilla).